The following is a 250-amino-acid chain: Anti-Pycsar protein Apyc1 (250 aa).

A beta-lactamase-like region spans residues 19 to 220 (YNNNALVKCN…AVQEMIMLMH (202 aa)). Zn(2+) is bound by residues His-61, His-63, Asp-65, His-66, His-146, Asp-166, and His-220.

This sequence belongs to the anti-Pycsar protein Apyc1 family. Homodimer. The cofactor is Zn(2+).

The enzyme catalyses 3',5'-cyclic CMP + H2O = CMP + H(+). It carries out the reaction 3',5'-cyclic UMP + H2O = UMP + H(+). Counteracts the endogenous Pycsar antiviral defense system. Phosphodiesterase that enables metal-dependent hydrolysis of host cyclic nucleotide Pycsar defense signals such as cCMP and cUMP. The sequence is that of Anti-Pycsar protein Apyc1 from Paenibacillus xerothermodurans.